The chain runs to 215 residues: ATP phosphoribosyltransferase (215 aa).

This sequence belongs to the ATP phosphoribosyltransferase family. Short subfamily. Heteromultimer composed of HisG and HisZ subunits.

The protein localises to the cytoplasm. The catalysed reaction is 1-(5-phospho-beta-D-ribosyl)-ATP + diphosphate = 5-phospho-alpha-D-ribose 1-diphosphate + ATP. It participates in amino-acid biosynthesis; L-histidine biosynthesis; L-histidine from 5-phospho-alpha-D-ribose 1-diphosphate: step 1/9. Its function is as follows. Catalyzes the condensation of ATP and 5-phosphoribose 1-diphosphate to form N'-(5'-phosphoribosyl)-ATP (PR-ATP). Has a crucial role in the pathway because the rate of histidine biosynthesis seems to be controlled primarily by regulation of HisG enzymatic activity. This chain is ATP phosphoribosyltransferase, found in Lachnoclostridium phytofermentans (strain ATCC 700394 / DSM 18823 / ISDg) (Clostridium phytofermentans).